Consider the following 85-residue polypeptide: UPF0386 protein RL2079 (85 aa).

The protein belongs to the UPF0386 family.

The protein is UPF0386 protein RL2079 of Rhizobium johnstonii (strain DSM 114642 / LMG 32736 / 3841) (Rhizobium leguminosarum bv. viciae).